The chain runs to 489 residues: Carboxyl-terminal-processing peptidase 1, chloroplastic (489 aa).

The span at 1 to 20 shows a compositional bias: low complexity; sequence MRLLLPFSSPLSATSSPSTP. The tract at residues 1–27 is disordered; it reads MRLLLPFSSPLSATSSPSTPQFIPELP. The PDZ domain maps to 189 to 273; it reads FSRMSKYDIT…TFVVLKVKHG (85 aa). Catalysis depends on charge relay system residues S403 and K428.

It belongs to the peptidase S41A family.

The protein resides in the plastid. It is found in the chloroplast thylakoid lumen. It carries out the reaction The enzyme shows specific recognition of a C-terminal tripeptide, Xaa-Yaa-Zaa, in which Xaa is preferably Ala or Leu, Yaa is preferably Ala or Tyr, and Zaa is preferably Ala, but then cleaves at a variable distance from the C-terminus. A typical cleavage is -Ala-Ala-|-Arg-Ala-Ala-Lys-Glu-Asn-Tyr-Ala-Leu-Ala-Ala.. Protease involved in the C-terminal processing of the chloroplastic D1 protein of photosystem II. This proteolytic processing is necessary to allow the light-driven assembly of the tetranuclear manganese cluster, which is responsible for photosynthetic water oxidation. The chain is Carboxyl-terminal-processing peptidase 1, chloroplastic (CTPA1) from Arabidopsis thaliana (Mouse-ear cress).